Reading from the N-terminus, the 665-residue chain is Syntabulin (665 aa).

Residues 1–22 are compositionally biased toward basic and acidic residues; that stretch reads MGPLRESKKEQRVQHQEKEISR. The disordered stretch occupies residues 1 to 271; it reads MGPLRESKKE…GVKPPNPEQY (271 aa). A sufficient for interaction with KIF5B region spans residues 2-421; it reads GPLRESKKEQ…DKLPDGLSLE (420 aa). Low complexity predominate over residues 35–52; it reads PQQQQQQQNKVSPASESP. Serine 54 is modified (phosphoserine). The segment covering 61 to 77 has biased composition (low complexity); it reads FNPSSSGRSARTISSNS. Polar residues predominate over residues 85 to 101; that stretch reads CPSSQSVSPVKTPSDTG. Serine 111 carries the post-translational modification Phosphoserine. A compositionally biased stretch (low complexity) spans 141–162; that stretch reads GGIIKPGSEADFSSSSSTGSIS. The segment covering 168-180 has biased composition (polar residues); it reads MSTTGNKRASFSR. The span at 225–245 shows a compositional bias: low complexity; that stretch reads SYAPSSPSSSNSGSYKGSDCS. Positions 275 to 357 form a coiled coil; the sequence is LQQKEVTVRH…MRSSLADKDK (83 aa). Residues 314 to 421 form a sufficient for interaction with STX1A region; that stretch reads REDWIEEECH…DKLPDGLSLE (108 aa). Phosphoserine is present on residues serine 400 and serine 557. Residues 609-629 traverse the membrane as a helical segment; it reads FLVDLLAVAAPVVPTVLWAFS.

As to quaternary structure, interacts with STX1A and KIF5B.

The protein localises to the golgi apparatus membrane. Functionally, part of a kinesin motor-adapter complex that is critical for the anterograde axonal transport of active zone components and contributes to activity-dependent presynaptic assembly during neuronal development. In Mus musculus (Mouse), this protein is Syntabulin (Sybu).